The primary structure comprises 332 residues: GTP cyclohydrolase-2 (332 aa).

2 disordered regions span residues 1-20 and 25-46; these read MASK…SETH and PLLS…IPPE. Residues 29 to 41 show a composition bias toward polar residues; it reads PTLTPSHIPSQTP. GTP is bound at residue 171–175; the sequence is RIHSE. 3 residues coordinate Zn(2+): Cys-176, Cys-187, and Cys-189. GTP contacts are provided by residues Gln-192, 214-216, and Thr-236; that span reads EGR. Asp-248 functions as the Proton acceptor in the catalytic mechanism. The Nucleophile role is filled by Arg-250. 2 residues coordinate GTP: Thr-271 and Lys-276.

The protein belongs to the GTP cyclohydrolase II family. Requires Zn(2+) as cofactor.

It catalyses the reaction GTP + 4 H2O = 2,5-diamino-6-hydroxy-4-(5-phosphoribosylamino)-pyrimidine + formate + 2 phosphate + 3 H(+). It participates in cofactor biosynthesis; riboflavin biosynthesis; 5-amino-6-(D-ribitylamino)uracil from GTP: step 1/4. Its function is as follows. Catalyzes the conversion of GTP to 2,5-diamino-6-ribosylamino-4(3H)-pyrimidinone 5'-phosphate (DARP), formate and pyrophosphate. In Meyerozyma guilliermondii (strain ATCC 6260 / CBS 566 / DSM 6381 / JCM 1539 / NBRC 10279 / NRRL Y-324) (Yeast), this protein is GTP cyclohydrolase-2 (RIB1).